Reading from the N-terminus, the 291-residue chain is Kidney mitochondrial carrier protein 1 (291 aa).

N-acetylserine is present on serine 2. 3 Solcar repeats span residues 7-96 (KPFV…LKRL), 104-189 (ETLL…TKKH), and 198-289 (DTVS…LKKL). The next 6 membrane-spanning stretches (helical) occupy residues 9–26 (FVYG…TFPI), 71–89 (GIAP…KIGT), 106–124 (LLIN…SAIA), 164–183 (GVSL…LPVY), 204–224 (FLSS…VDVV), and 264–283 (GFWP…FLTY).

This sequence belongs to the mitochondrial carrier (TC 2.A.29) family. In terms of assembly, interacts with VDAC1.

It localises to the mitochondrion inner membrane. The catalysed reaction is sulfite(in) + sulfate(out) = sulfite(out) + sulfate(in). It catalyses the reaction thiosulfate(in) + sulfate(out) = thiosulfate(out) + sulfate(in). It carries out the reaction sulfate(out) + phosphate(in) = sulfate(in) + phosphate(out). The enzyme catalyses oxalate(in) + sulfate(out) = oxalate(out) + sulfate(in). The catalysed reaction is malonate(in) + sulfate(out) = malonate(out) + sulfate(in). It catalyses the reaction maleate(in) + sulfate(out) = maleate(out) + sulfate(in). It carries out the reaction (S)-malate(in) + sulfate(out) = (S)-malate(out) + sulfate(in). The enzyme catalyses (3S)-citramalate(in) + sulfate(out) = (3S)-citramalate(out) + sulfate(in). The catalysed reaction is (3R)-citramalate(in) + sulfate(out) = (3R)-citramalate(out) + sulfate(in). It catalyses the reaction sulfate(out) + succinate(in) = sulfate(in) + succinate(out). It carries out the reaction (S,S)-tartrate(in) + sulfate(out) = (S,S)-tartrate(out) + sulfate(in). The enzyme catalyses (2R,3R)-tartrate(in) + sulfate(out) = (2R,3R)-tartrate(out) + sulfate(in). The catalysed reaction is D-aspartate(in) + sulfate(out) = D-aspartate(out) + sulfate(in). It catalyses the reaction L-aspartate(in) + sulfate(out) = L-aspartate(out) + sulfate(in). It carries out the reaction sulfate(in) = sulfate(out). The enzyme catalyses phosphate(in) = phosphate(out). The catalysed reaction is (S)-malate(out) = (S)-malate(in). In terms of biological role, antiporter that transports inorganic anions (sulfate, sulfite, thiosulfate and phosphate) and, to a lesser extent, a variety of dicarboxylates (e.g. malonate, malate and citramalate) and, even more so, aspartate. The sulfate/sulfate exchange is much higher than the phosphate/phosphate and malate/malate exchanges. The transport affinities is higher for sulfate and thiosulfate than for any other substrate. May catalyze the export of sulfite and thiosulfate (the hydrogen sulfide degradation products) from the mitochondria, thereby modulating the level of the hydrogen sulfide. Also may mediate a very low unidirectional transport of sulfate, phosphate and (S)-malate. The chain is Kidney mitochondrial carrier protein 1 from Rattus norvegicus (Rat).